We begin with the raw amino-acid sequence, 169 residues long: Nascent polypeptide-associated complex subunit alpha (169 aa).

Positions Asn-14–Leu-78 constitute an NAC-A/B domain. Residues Ile-85 to Gly-128 form a disordered region. Residues Leu-130–Lys-169 enclose the UBA domain.

It belongs to the NAC-alpha family. Part of the nascent polypeptide-associated complex (NAC), consisting of EGD2 and EGD1. NAC associates with ribosomes via EGD1.

It localises to the cytoplasm. Its subcellular location is the nucleus. In terms of biological role, component of the nascent polypeptide-associated complex (NAC), a dynamic component of the ribosomal exit tunnel, protecting the emerging polypeptides from interaction with other cytoplasmic proteins to ensure appropriate nascent protein targeting. The NAC complex also promotes mitochondrial protein import by enhancing productive ribosome interactions with the outer mitochondrial membrane and blocks the inappropriate interaction of ribosomes translating non-secretory nascent polypeptides with translocation sites in the membrane of the endoplasmic reticulum. EGD2 may also be involved in transcription regulation. The chain is Nascent polypeptide-associated complex subunit alpha (EGD2) from Vanderwaltozyma polyspora (strain ATCC 22028 / DSM 70294 / BCRC 21397 / CBS 2163 / NBRC 10782 / NRRL Y-8283 / UCD 57-17) (Kluyveromyces polysporus).